The primary structure comprises 261 residues: MTDPFTSDGAKMPPKPFTIEEGRRQVRSFVLRQGRFTPAQQRTFDALWPRFGLDYLGAPRDLAATFGRDAHKVLEIGFGNGAALRFAAQQDPSRDYIGIEVHAPGVGRLLNALEEDGSTHVRLYHHDAVEVLEHEIADGALDEVRIYFPDPWHKKRHNKRRLIQPAFAQLLVRKLREGGRLHAATDWADYAEQMWDVLDATPGLVNRAGPRGHVERPTWRPQTHFETRGQKLGHGVWDLLYDRDSGIGNRESQEQLPSASG.

Positions 75, 100, 127, and 150 each coordinate S-adenosyl-L-methionine. Residue aspartate 150 is part of the active site. Position 154 (lysine 154) interacts with substrate. An interaction with RNA region spans residues 156–161 (RHNKRR). Substrate is bound by residues aspartate 186 and 223-226 (THFE).

The protein belongs to the class I-like SAM-binding methyltransferase superfamily. TrmB family.

It catalyses the reaction guanosine(46) in tRNA + S-adenosyl-L-methionine = N(7)-methylguanosine(46) in tRNA + S-adenosyl-L-homocysteine. The protein operates within tRNA modification; N(7)-methylguanine-tRNA biosynthesis. Functionally, catalyzes the formation of N(7)-methylguanine at position 46 (m7G46) in tRNA. The protein is tRNA (guanine-N(7)-)-methyltransferase of Xanthomonas axonopodis pv. citri (strain 306).